Reading from the N-terminus, the 201-residue chain is Holliday junction resolvase RecU (201 aa).

Residues Thr-85, Asp-87, Glu-100, and Gln-119 each coordinate Mg(2+).

This sequence belongs to the RecU family. Mg(2+) is required as a cofactor.

Its subcellular location is the cytoplasm. The catalysed reaction is Endonucleolytic cleavage at a junction such as a reciprocal single-stranded crossover between two homologous DNA duplexes (Holliday junction).. Its function is as follows. Endonuclease that resolves Holliday junction intermediates in genetic recombination. Cleaves mobile four-strand junctions by introducing symmetrical nicks in paired strands. Promotes annealing of linear ssDNA with homologous dsDNA. Required for DNA repair, homologous recombination and chromosome segregation. The polypeptide is Holliday junction resolvase RecU (Geobacillus thermodenitrificans (strain NG80-2)).